Here is a 79-residue protein sequence, read N- to C-terminus: Cytochrome b (79 aa).

The next 3 helical transmembrane spans lie at 1–7 (SALFLAM), 31–52 (WLIR…YLHI), and 67–79 (WNIG…LTMA). Heme b is bound by residues His-37 and His-51.

This sequence belongs to the cytochrome b family. In terms of assembly, the cytochrome bc1 complex contains 11 subunits: 3 respiratory subunits (MT-CYB, CYC1 and UQCRFS1), 2 core proteins (UQCRC1 and UQCRC2) and 6 low-molecular weight proteins (UQCRH/QCR6, UQCRB/QCR7, UQCRQ/QCR8, UQCR10/QCR9, UQCR11/QCR10 and a cleavage product of UQCRFS1). This cytochrome bc1 complex then forms a dimer. The cofactor is heme b.

The protein localises to the mitochondrion inner membrane. Component of the ubiquinol-cytochrome c reductase complex (complex III or cytochrome b-c1 complex) that is part of the mitochondrial respiratory chain. The b-c1 complex mediates electron transfer from ubiquinol to cytochrome c. Contributes to the generation of a proton gradient across the mitochondrial membrane that is then used for ATP synthesis. The protein is Cytochrome b (MT-CYB) of Dipodomys californicus (California kangaroo rat).